The chain runs to 507 residues: Glycine, alanine and asparagine-rich protein (507 aa).

An N-terminal signal peptide occupies residues 1–17; sequence MLRVPLLVLCLALSVGA. Residues 158-185 are a coiled coil; the sequence is SAQALASATAELQAAQDAYDQASAYAEA. A compositionally biased stretch (gly residues) spans 462-498; the sequence is GNGNGGNGRNGNGGNGRNGNGGNGGNGNGRNGRGGRY. A disordered region spans residues 462 to 507; that stretch reads GNGNGGNGRNGNGGNGRNGNGGNGGNGNGRNGRGGRYYYGSSDYYY.

Component of the acid-soluble and acid-insoluble organic matrix of calcified shell layers (at protein level).

The protein localises to the secreted. This chain is Glycine, alanine and asparagine-rich protein, found in Haliotis asinina (Donkey's ear abalone).